Here is a 1286-residue protein sequence, read N- to C-terminus: Lysine-specific demethylase JMJ705 (1286 aa).

One can recognise a JmjN domain in the interval 25-66; the sequence is APEFRPTAAEFADPVSYILKIEPAAAPYGICKVVPPLPPPPK. The disordered stretch occupies residues 82–105; sequence PDDRSPSFPTRHQQVGLCPRRTRP. The JmjC domain occupies 201–367; the sequence is ETAWNMRGVA…IAKEAAIRRA (167 aa). Fe cation is bound by residues H244, E246, and H335. The segment covering 641-679 has biased composition (polar residues); it reads PNSSNNVGCVGTKLSSSSTERQERPSSQNAHCNGSSVIS. 3 disordered regions span residues 641-686, 1013-1060, and 1077-1164; these read PNSS…KGVR, AEPV…HSQE, and PAGT…PKQA. Residues 1119–1136 show a composition bias toward polar residues; the sequence is HASGQKSNVQEANANSAS. Residues 1167–1189 form a C2H2-type 1; degenerate zinc finger; that stretch reads YSCDIEGCSMSFRTKRDLSLHKS. 3 C2H2-type zinc fingers span residues 1190-1214, 1220-1244, and 1250-1276; these read DICP…RKVH, LTCP…LRVH, and YVCH…KTGH.

Requires Fe(2+) as cofactor. As to expression, expressed in leaves and flag leaves. Expressed at low levels in roots, shoots, stems and panicles.

The protein resides in the nucleus. The enzyme catalyses N(6),N(6),N(6)-trimethyl-L-lysyl(27)-[histone H3] + 2 2-oxoglutarate + 2 O2 = N(6)-methyl-L-lysyl(27)-[histone H3] + 2 formaldehyde + 2 succinate + 2 CO2. In terms of biological role, histone demethylase that demethylates 'Lys-27' (H3K27me) of histone H3 with a specific activity for H3K27me3 and H3K27me2. No activity on H3K4me3, H3K9me3, H3K27me1 and H3K36me3. Involved in biotic stress response. May demethylate H3K27me3-marked defense-related genes and increase their basal and induced expression levels during pathogen infection. The protein is Lysine-specific demethylase JMJ705 (JMJ705) of Oryza sativa subsp. japonica (Rice).